Consider the following 827-residue polypeptide: Probable beta-glucosidase H (827 aa).

Aspartate 223 is an active-site residue. Residues 387–546 (RLLTNAVMHF…DSAEMVRSAV (160 aa)) form the PA14 domain. N-linked (GlcNAc...) asparagine glycans are attached at residues asparagine 471, asparagine 594, asparagine 600, and asparagine 625.

This sequence belongs to the glycosyl hydrolase 3 family.

The protein localises to the secreted. It catalyses the reaction Hydrolysis of terminal, non-reducing beta-D-glucosyl residues with release of beta-D-glucose.. The protein operates within glycan metabolism; cellulose degradation. In terms of biological role, beta-glucosidases are one of a number of cellulolytic enzymes involved in the degradation of cellulosic biomass. Catalyzes the last step releasing glucose from the inhibitory cellobiose. This chain is Probable beta-glucosidase H (bglH), found in Aspergillus oryzae (strain ATCC 42149 / RIB 40) (Yellow koji mold).